Consider the following 129-residue polypeptide: MVKELIRVKKRVKKQILDGIAHIHASFNNTIISISDKKGNVLGWATSGGSGFRGSRKSTPFAAQVAVERCADIVKSYGIKNLEVMVKGPGPGRESSIRTLNTIGFRIINITDVTPIPHNGCRSPKKRRV.

It belongs to the universal ribosomal protein uS11 family. In terms of assembly, part of the 30S ribosomal subunit. Interacts with proteins S7 and S18. Binds to IF-3.

Located on the platform of the 30S subunit, it bridges several disparate RNA helices of the 16S rRNA. Forms part of the Shine-Dalgarno cleft in the 70S ribosome. This Buchnera aphidicola subsp. Baizongia pistaciae (strain Bp) protein is Small ribosomal subunit protein uS11.